Consider the following 284-residue polypeptide: MELWYTEKHTEDVKFSIRVDRELYTEQSKFQRIDILESKEFGRFFTLDGLMMVTEKDEFIYHDMIVHVPMATNPNIKKVLVIGAGDGGTIRELTRYKTIEKIDMVEIDESVVEACKKYLPKTACKLEEERVNIVYEDGLKFVRNKENDYDLIIVDSTDPFGPGEGLFTKEFYGNCYKALSEDGILVNQHESPYYEYYAKSMKDAHEKIQGLFKINKVYQAHIPTYPSGHWLFGFASKKYDPIKDLNVEAWKSLGIQTKYYNTDLHVGCFALPTYVIDMLNEDKE.

One can recognise a PABS domain in the interval 2–237; it reads ELWYTEKHTE…GHWLFGFASK (236 aa). Residue glutamine 31 coordinates S-methyl-5'-thioadenosine. Spermidine-binding residues include histidine 62 and aspartate 86. S-methyl-5'-thioadenosine-binding positions include glutamate 106 and 137–138; that span reads DG. The active-site Proton acceptor is aspartate 155. 155-158 is a spermidine binding site; that stretch reads DSTD. Proline 162 is an S-methyl-5'-thioadenosine binding site.

The protein belongs to the spermidine/spermine synthase family. As to quaternary structure, homodimer or homotetramer.

The protein resides in the cytoplasm. It carries out the reaction S-adenosyl 3-(methylsulfanyl)propylamine + putrescine = S-methyl-5'-thioadenosine + spermidine + H(+). The protein operates within amine and polyamine biosynthesis; spermidine biosynthesis; spermidine from putrescine: step 1/1. Its function is as follows. Catalyzes the irreversible transfer of a propylamine group from the amino donor S-adenosylmethioninamine (decarboxy-AdoMet) to putrescine (1,4-diaminobutane) to yield spermidine. The sequence is that of Polyamine aminopropyltransferase from Clostridium botulinum (strain Alaska E43 / Type E3).